Consider the following 123-residue polypeptide: Putative membrane protein insertion efficiency factor (123 aa).

It belongs to the UPF0161 family.

The protein resides in the cell inner membrane. Functionally, could be involved in insertion of integral membrane proteins into the membrane. The chain is Putative membrane protein insertion efficiency factor from Beijerinckia indica subsp. indica (strain ATCC 9039 / DSM 1715 / NCIMB 8712).